The sequence spans 1381 residues: DNA-directed RNA polymerase subunit beta'' (1381 aa).

Zn(2+) contacts are provided by cysteine 224, cysteine 295, cysteine 302, and cysteine 305.

The protein belongs to the RNA polymerase beta' chain family. RpoC2 subfamily. As to quaternary structure, in plastids the minimal PEP RNA polymerase catalytic core is composed of four subunits: alpha, beta, beta', and beta''. When a (nuclear-encoded) sigma factor is associated with the core the holoenzyme is formed, which can initiate transcription. Zn(2+) is required as a cofactor.

The protein resides in the plastid. It localises to the chloroplast. The catalysed reaction is RNA(n) + a ribonucleoside 5'-triphosphate = RNA(n+1) + diphosphate. Functionally, DNA-dependent RNA polymerase catalyzes the transcription of DNA into RNA using the four ribonucleoside triphosphates as substrates. The chain is DNA-directed RNA polymerase subunit beta'' from Lactuca sativa (Garden lettuce).